Here is a 96-residue protein sequence, read N- to C-terminus: Large ribosomal subunit protein bL28 (96 aa).

Belongs to the bacterial ribosomal protein bL28 family.

This is Large ribosomal subunit protein bL28 from Leptospira biflexa serovar Patoc (strain Patoc 1 / Ames).